The primary structure comprises 105 residues: UPF0473 protein SAG2089 (105 aa).

This sequence belongs to the UPF0473 family.

This chain is UPF0473 protein SAG2089, found in Streptococcus agalactiae serotype V (strain ATCC BAA-611 / 2603 V/R).